Here is a 290-residue protein sequence, read N- to C-terminus: Arylamine N-acetyltransferase, pineal gland isozyme NAT-10 (290 aa).

Catalysis depends on Cys-68, which acts as the Acyl-thioester intermediate. Residues His-107 and Asp-122 contribute to the active site.

The protein belongs to the arylamine N-acetyltransferase family.

The enzyme catalyses an arylamine + acetyl-CoA = an N-acetylarylamine + CoA. This is Arylamine N-acetyltransferase, pineal gland isozyme NAT-10 from Gallus gallus (Chicken).